A 795-amino-acid chain; its full sequence is Phenylalanine--tRNA ligase beta subunit (795 aa).

One can recognise a tRNA-binding domain in the interval alanine 39–arginine 148. Residues proline 401 to asparagine 476 enclose the B5 domain. Residues aspartate 454, aspartate 460, glutamate 463, and glutamate 464 each coordinate Mg(2+). Positions serine 701–arginine 794 constitute an FDX-ACB domain.

The protein belongs to the phenylalanyl-tRNA synthetase beta subunit family. Type 1 subfamily. In terms of assembly, tetramer of two alpha and two beta subunits. Requires Mg(2+) as cofactor.

The protein resides in the cytoplasm. It carries out the reaction tRNA(Phe) + L-phenylalanine + ATP = L-phenylalanyl-tRNA(Phe) + AMP + diphosphate + H(+). The protein is Phenylalanine--tRNA ligase beta subunit of Pectobacterium atrosepticum (strain SCRI 1043 / ATCC BAA-672) (Erwinia carotovora subsp. atroseptica).